We begin with the raw amino-acid sequence, 194 residues long: dCTP deaminase (194 aa).

DCTP is bound by residues R110–R115, D128, V136–E138, Y171, K178, and Q182. E138 acts as the Proton donor/acceptor in catalysis. A disordered region spans residues Y171–S194.

Belongs to the dCTP deaminase family. As to quaternary structure, homotrimer.

The catalysed reaction is dCTP + H2O + H(+) = dUTP + NH4(+). The protein operates within pyrimidine metabolism; dUMP biosynthesis; dUMP from dCTP (dUTP route): step 1/2. Catalyzes the deamination of dCTP to dUTP. The protein is dCTP deaminase of Shewanella amazonensis (strain ATCC BAA-1098 / SB2B).